A 398-amino-acid chain; its full sequence is Dual-specificity RNA methyltransferase RlmN (398 aa).

Glu119 acts as the Proton acceptor in catalysis. One can recognise a Radical SAM core domain in the interval 125–364; that stretch reads EADRATLCVS…TIVRKTRGDD (240 aa). Cys132 and Cys369 are joined by a disulfide. Residues Cys139, Cys143, and Cys146 each contribute to the [4Fe-4S] cluster site. Residues 193-194, Ser225, 247-249, and Asn326 each bind S-adenosyl-L-methionine; these read GE and SLH. Cys369 functions as the S-methylcysteine intermediate in the catalytic mechanism.

It belongs to the radical SAM superfamily. RlmN family. Requires [4Fe-4S] cluster as cofactor.

Its subcellular location is the cytoplasm. The catalysed reaction is adenosine(2503) in 23S rRNA + 2 reduced [2Fe-2S]-[ferredoxin] + 2 S-adenosyl-L-methionine = 2-methyladenosine(2503) in 23S rRNA + 5'-deoxyadenosine + L-methionine + 2 oxidized [2Fe-2S]-[ferredoxin] + S-adenosyl-L-homocysteine. It catalyses the reaction adenosine(37) in tRNA + 2 reduced [2Fe-2S]-[ferredoxin] + 2 S-adenosyl-L-methionine = 2-methyladenosine(37) in tRNA + 5'-deoxyadenosine + L-methionine + 2 oxidized [2Fe-2S]-[ferredoxin] + S-adenosyl-L-homocysteine. In terms of biological role, specifically methylates position 2 of adenine 2503 in 23S rRNA and position 2 of adenine 37 in tRNAs. m2A2503 modification seems to play a crucial role in the proofreading step occurring at the peptidyl transferase center and thus would serve to optimize ribosomal fidelity. This Yersinia pseudotuberculosis serotype O:3 (strain YPIII) protein is Dual-specificity RNA methyltransferase RlmN.